A 242-amino-acid polypeptide reads, in one-letter code: uncharacterized protein (242 aa).

The Response regulatory domain maps to 3–116 (TALVIDDEQF…RLNKTVKRLN (114 aa)). The residue at position 54 (Asp-54) is a 4-aspartylphosphate. Positions 139 to 240 (IPCIGHNRIV…LKVLKEMLGI (102 aa)) constitute an HTH LytTR-type domain.

This is an uncharacterized protein from Vibrio parahaemolyticus serotype O3:K6 (strain RIMD 2210633).